A 182-amino-acid polypeptide reads, in one-letter code: MIKGAVAARYAQALFDVARDNNRIAETENELRGFMRLLDESRDLQQVLYNPQVPVELKKEIVREAFGKELSGTTLNFLCLVLDRRREVYLKGIADHFIALANETRNIIEAEVTSALELSVVHKVNLMQVLSRMTGKELRIRYQVDPDIIGGLVVRLGDRIIDGSIKRQLERLKDSIRETKVG.

Belongs to the ATPase delta chain family. In terms of assembly, F-type ATPases have 2 components, F(1) - the catalytic core - and F(0) - the membrane proton channel. F(1) has five subunits: alpha(3), beta(3), gamma(1), delta(1), epsilon(1). F(0) has three main subunits: a(1), b(2) and c(10-14). The alpha and beta chains form an alternating ring which encloses part of the gamma chain. F(1) is attached to F(0) by a central stalk formed by the gamma and epsilon chains, while a peripheral stalk is formed by the delta and b chains.

It is found in the cell membrane. In terms of biological role, f(1)F(0) ATP synthase produces ATP from ADP in the presence of a proton or sodium gradient. F-type ATPases consist of two structural domains, F(1) containing the extramembraneous catalytic core and F(0) containing the membrane proton channel, linked together by a central stalk and a peripheral stalk. During catalysis, ATP synthesis in the catalytic domain of F(1) is coupled via a rotary mechanism of the central stalk subunits to proton translocation. This protein is part of the stalk that links CF(0) to CF(1). It either transmits conformational changes from CF(0) to CF(1) or is implicated in proton conduction. The polypeptide is ATP synthase subunit delta (Desulforudis audaxviator (strain MP104C)).